The following is a 286-amino-acid chain: Bifunctional protein FolD (286 aa).

Residues 165 to 167 (GRS), Ser-190, and Val-231 contribute to the NADP(+) site.

This sequence belongs to the tetrahydrofolate dehydrogenase/cyclohydrolase family. In terms of assembly, homodimer.

It carries out the reaction (6R)-5,10-methylene-5,6,7,8-tetrahydrofolate + NADP(+) = (6R)-5,10-methenyltetrahydrofolate + NADPH. It catalyses the reaction (6R)-5,10-methenyltetrahydrofolate + H2O = (6R)-10-formyltetrahydrofolate + H(+). The protein operates within one-carbon metabolism; tetrahydrofolate interconversion. Functionally, catalyzes the oxidation of 5,10-methylenetetrahydrofolate to 5,10-methenyltetrahydrofolate and then the hydrolysis of 5,10-methenyltetrahydrofolate to 10-formyltetrahydrofolate. This is Bifunctional protein FolD from Bacillus cereus (strain ZK / E33L).